Consider the following 468-residue polypeptide: Argininosuccinate lyase (468 aa).

This sequence belongs to the lyase 1 family. Argininosuccinate lyase subfamily.

The protein localises to the cytoplasm. It catalyses the reaction 2-(N(omega)-L-arginino)succinate = fumarate + L-arginine. It participates in amino-acid biosynthesis; L-arginine biosynthesis; L-arginine from L-ornithine and carbamoyl phosphate: step 3/3. This Cutibacterium acnes (strain DSM 16379 / KPA171202) (Propionibacterium acnes) protein is Argininosuccinate lyase.